The following is a 663-amino-acid chain: MSNSQANAGSSGSADEPTLNPSGSATLVPNLTTTNASSQATPASTIPQQQQPQQSQPQPQPQPPPHIVGASTADAGGGVGVVVAGGSEGVNLDSSPRESGDDSEDESEILEESPCGRWLKRREEVDQRDVPGIDCVHLAMDTEEGVEVVWNEVQYANMQELKSQEEKMRQVFDNLLQLDHQNIVKFHRYWTDTQQAERPRVIFITEYMSSGSLKQFLKRTKRNAKRLPLESWRRWCTQILSALSYLHSCTPPIIHGNLTCDSIFIQHNGLVKIGSVVPDAVHYSVRRQWDRESAREQERERGAHYFQAPEYGAAEQLTAALDIYAFGMCALEMAALEIQPSNSESTAINEETIQRTICSLESDLQRDLIEKCLNPQPQGRPSANDLLFHPLLFEVHSLKLLTAHCLVFSPANRTMFSETAFDGLMQRYYQPDVIMAQLMSGGQERQYRLADVAGADKLEKFVEDVKYGVYPLITYNGKKPPNFRSRAASPERADSVKSATPEPVDTESRRIVNMMCSVKIKEDSNDIIMTILLRMDDKMNRQLTCQVNENDTAADLTSELVRLGFVHLDDQDKIEVLLEETLKAGVMSDGAGAESSGAGVTTTATMAALEQLERNWSISDADKTMGSSMSSPATAMMYVPQDQQQYQQQQQEADVDQSGTTSN.

The segment covering 1-14 (MSNSQANAGSSGSA) has biased composition (low complexity). The disordered stretch occupies residues 1 to 112 (MSNSQANAGS…SEDESEILEE (112 aa)). Over residues 19 to 46 (LNPSGSATLVPNLTTTNASSQATPASTI) the composition is skewed to polar residues. 2 stretches are compositionally biased toward low complexity: residues 47 to 57 (PQQQQPQQSQP) and 81 to 94 (VVVA…NLDS). Over residues 101–111 (DDSEDESEILE) the composition is skewed to acidic residues. Residues 122–392 (REEVDQRDVP…ANDLLFHPLL (271 aa)) enclose the Protein kinase domain. 2 disordered regions span residues 481–505 (PNFR…EPVD) and 638–663 (YVPQ…TTSN). A phosphoserine mark is found at Ser-489, Ser-495, and Ser-498. Thr-500 is subject to Phosphothreonine. A compositionally biased stretch (low complexity) spans 641 to 652 (QDQQQYQQQQQE).

It belongs to the protein kinase superfamily. Ser/Thr protein kinase family.

It localises to the cytoplasm. It is found in the cell cortex. Its function is as follows. May play a role in subcellular trafficking between the endoplasmic reticulum and Golgi apparatus. The polypeptide is Nuclear receptor-binding protein homolog (Drosophila pseudoobscura pseudoobscura (Fruit fly)).